Here is a 379-residue protein sequence, read N- to C-terminus: Epoxyqueuosine reductase (379 aa).

Residue D139 is the Proton donor of the active site. Positions I181–T213 constitute a 4Fe-4S ferredoxin-type domain. [4Fe-4S] cluster contacts are provided by C193, C196, C199, C203, C219, C246, C249, and C253.

This sequence belongs to the QueG family. In terms of assembly, monomer. It depends on cob(II)alamin as a cofactor. Requires [4Fe-4S] cluster as cofactor.

The protein localises to the cytoplasm. The enzyme catalyses epoxyqueuosine(34) in tRNA + AH2 = queuosine(34) in tRNA + A + H2O. Its pathway is tRNA modification; tRNA-queuosine biosynthesis. Its function is as follows. Catalyzes the conversion of epoxyqueuosine (oQ) to queuosine (Q), which is a hypermodified base found in the wobble positions of tRNA(Asp), tRNA(Asn), tRNA(His) and tRNA(Tyr). This chain is Epoxyqueuosine reductase, found in Escherichia coli (strain K12).